A 191-amino-acid chain; its full sequence is Peptidyl-tRNA hydrolase (191 aa).

Tyr-14 contributes to the tRNA binding site. His-19 serves as the catalytic Proton acceptor. Residues Tyr-64, Asn-66, and Asn-112 each contribute to the tRNA site.

This sequence belongs to the PTH family. As to quaternary structure, monomer.

It is found in the cytoplasm. It catalyses the reaction an N-acyl-L-alpha-aminoacyl-tRNA + H2O = an N-acyl-L-amino acid + a tRNA + H(+). In terms of biological role, hydrolyzes ribosome-free peptidyl-tRNAs (with 1 or more amino acids incorporated), which drop off the ribosome during protein synthesis, or as a result of ribosome stalling. Its function is as follows. Catalyzes the release of premature peptidyl moieties from peptidyl-tRNA molecules trapped in stalled 50S ribosomal subunits, and thus maintains levels of free tRNAs and 50S ribosomes. The protein is Peptidyl-tRNA hydrolase of Lachnoclostridium phytofermentans (strain ATCC 700394 / DSM 18823 / ISDg) (Clostridium phytofermentans).